Reading from the N-terminus, the 156-residue chain is Small ribosomal subunit protein uS7 (156 aa).

The protein belongs to the universal ribosomal protein uS7 family. In terms of assembly, part of the 30S ribosomal subunit. Contacts proteins S9 and S11.

Its function is as follows. One of the primary rRNA binding proteins, it binds directly to 16S rRNA where it nucleates assembly of the head domain of the 30S subunit. Is located at the subunit interface close to the decoding center, probably blocks exit of the E-site tRNA. This is Small ribosomal subunit protein uS7 from Streptomyces griseus subsp. griseus (strain JCM 4626 / CBS 651.72 / NBRC 13350 / KCC S-0626 / ISP 5235).